The chain runs to 635 residues: Threonine--tRNA ligase (635 aa).

The TGS domain occupies 1-61; sequence MINISFPDGS…EHDCKLRILT (61 aa). The tract at residues 242 to 533 is catalytic; sequence DHRKIGKELD…LIEEYAGKFP (292 aa). Cys333, His384, and His510 together coordinate Zn(2+).

This sequence belongs to the class-II aminoacyl-tRNA synthetase family. In terms of assembly, homodimer. Zn(2+) is required as a cofactor.

The protein localises to the cytoplasm. The enzyme catalyses tRNA(Thr) + L-threonine + ATP = L-threonyl-tRNA(Thr) + AMP + diphosphate + H(+). Its function is as follows. Catalyzes the attachment of threonine to tRNA(Thr) in a two-step reaction: L-threonine is first activated by ATP to form Thr-AMP and then transferred to the acceptor end of tRNA(Thr). Also edits incorrectly charged L-seryl-tRNA(Thr). This Rickettsia typhi (strain ATCC VR-144 / Wilmington) protein is Threonine--tRNA ligase.